We begin with the raw amino-acid sequence, 1218 residues long: NACHT, LRR and PYD domains-containing protein 1a allele 4 (1218 aa).

Residues 1–29 (MGESQSKQESNTRVAQHGSQQDVDPTFQT) are compositionally biased toward polar residues. Disordered stretches follow at residues 1 to 44 (MGES…QVEQ) and 71 to 91 (EMDH…DRSE). Over residues 77–87 (RRHSHQSKKKL) the composition is skewed to basic residues. Residues 175 to 484 (QLVIIEGAAG…EFFAAMSYIL (310 aa)) form the NACHT domain. Residue 181–188 (GAAGIGKS) participates in ATP binding. LRR repeat units follow at residues 343-364 (KERN…LTLC), 673-693 (NLEE…RSLC), and 730-750 (RLAE…RQLC). Positions 799-815 (TMPTENTDGEESLTSSK) are enriched in polar residues. A disordered region spans residues 799-842 (TMPTENTDGEESLTSSKQQQQQSGDKHMEPLGTDDDFWGPSGPV). The segment at 835–968 (FWGPSGPVST…HFAVLENPSF (134 aa)) is ZU5. The region spanning 835-1118 (FWGPSGPVST…LRPALPRMAS (284 aa)) is the FIIND domain. Positions 969–1118 (SPMGVLLRMI…LRPALPRMAS (150 aa)) are UPA. Positions 1122-1211 (DAPALLHFVD…HLIMDLLEKS (90 aa)) constitute a CARD domain.

Belongs to the NLRP family. Interacts (via LRR repeats) with BCL2 and BCL2L1 (via the loop between motifs BH4 and BH3). Interacts with NOD2; this interaction is enhanced in the presence of muramyl dipeptide (MDP) and increases IL1B release. Interacts with EIF2AK2/PKR; this interaction requires EIF2AK2 activity, is accompanied by EIF2AK2 autophosphorylation and promotes inflammasome assembly in response to danger-associated signals. Interacts with MEFV; this interaction targets Nlrp1a to degradation by autophagy, hence preventing excessive IL1B- and IL18-mediated inflammation. Interacts with DPP9; leading to inhibit activation of the inflammasome. DPP9 acts via formation of a ternary complex, composed of a DPP9 homodimer, one full-length NLRP1 protein, and one cleaved C-terminus of Nlrp1a (NACHT, LRR and PYD domains-containing protein 1a, C-terminus). Interacts with DPP8; leading to inhibit activation of the inflammasome, probably via formation of a ternary complex with DPP8. As to quaternary structure, interacts with the C-terminal part of Nlrp1a (NACHT, LRR and PYD domains-containing protein 1a, C-terminus) in absence of pathogens and other damage-associated signals. In terms of assembly, interacts with the N-terminal part of Nlrp1a (NACHT, LRR and PYD domains-containing protein 1a, N-terminus) in absence of pathogens and other damage-associated signals. Homomultimer; forms the Nlrp1a inflammasome polymeric complex, a filament composed of homopolymers of this form in response to pathogens and other damage-associated signals. The Nlrp1a inflammasome polymeric complex directly recruits pro-caspase-1 (proCASP1) independently of PYCARD/ASC. Interacts (via CARD domain) with CASP1 (via CARD domain); leading to CASP1 activation. Post-translationally, autocatalytically cleaved. Autocatalytic cleavage in FIIND region occurs constitutively, prior to activation signals, and is required for inflammasome activity (IL1B release), possibly by facilitating CASP1 binding. Both N- and C-terminal parts remain associated non-covalently. In terms of processing, ubiquitinated in response to pathogen-associated signals, leading to its degradation by the proteasome and subsequent release of the cleaved C-terminal part of the protein (NACHT, LRR and PYD domains-containing protein 1a, C-terminus), which polymerizes and forms the Nlrp1a inflammasome.

The protein resides in the cytoplasm. Its subcellular location is the cytosol. It is found in the nucleus. It localises to the inflammasome. Activated by pathogens and other damage-associated signals: activation promotes ubiquitination and degradation of the N-terminal part, releasing the cleaved C-terminal part of the protein (NACHT, LRR and PYD domains-containing protein 1a, C-terminus), which polymerizes and forms the Nlrp1a inflammasome. Nlrp1a inflammasome is inhibited by DPP8 and DPP9, which sequester the C-terminal fragment of Nlrp1a (NACHT, LRR and PYD domains-containing protein 1a, C-terminus) in a ternary complex, thereby preventing Nlrp1a oligomerization and activation. Nlrp1a inflammasome is strongly activated by Val-boroPro (Talabostat, PT-100), an inhibitor of dipeptidyl peptidases DPP8 and DPP9. Val-boroPro relieves inhibition of DPP8 and/or DPP9 by promoting disruption of the ternary complex, releasing its C-terminal part from autoinhibition. Not activated by cleavage by B.anthracis lethal toxin (LT) endopeptidase. Its function is as follows. Acts as the sensor component of the Nlrp1a inflammasome, which mediates inflammasome activation in response to various pathogen-associated signals, leading to subsequent pyroptosis. Inflammasomes are supramolecular complexes that assemble in the cytosol in response to pathogens and other damage-associated signals and play critical roles in innate immunity and inflammation. Acts as a recognition receptor (PRR): recognizes specific pathogens and other damage-associated signals, such as Val-boroPro inhibitor, and mediates the formation of the inflammasome polymeric complex. In response to pathogen-associated signals, the N-terminal part of Nlrp1a is degraded by the proteasome, releasing the cleaved C-terminal part of the protein (NACHT, LRR and PYD domains-containing protein 1a, C-terminus), which polymerizes to initiate the formation of the inflammasome complex: the inflammasome directly recruits pro-caspase-1 (proCASP1) independently of PYCARD/ASC and promotes caspase-1 (CASP1) activation, which subsequently cleaves and activates inflammatory cytokines IL1B and IL18 and gasdermin-D (GSDMD), leading to pyroptosis. In the absence of GSDMD expression, the Nlrp1a inflammasome is able to recruit and activate CASP8, leading to activation of gasdermin-E (GSDME). Functionally, constitutes the precursor of the Nlrp1a inflammasome, which mediates autoproteolytic processing within the FIIND domain to generate the N-terminal and C-terminal parts, which are associated non-covalently in absence of pathogens and other damage-associated signals. Regulatory part that prevents formation of the Nlrp1a inflammasome: in absence of pathogens and other damage-associated signals, interacts with the C-terminal part of Nlrp1a (NACHT, LRR and PYD domains-containing protein 1a, C-terminus), preventing activation of the Nlrp1a inflammasome. In response to pathogen-associated signals, this part is ubiquitinated by the N-end rule pathway and degraded by the proteasome, releasing the cleaved C-terminal part of the protein, which polymerizes and forms the Nlrp1a inflammasome. In terms of biological role, constitutes the active part of the Nlrp1a inflammasome. In absence of pathogens and other damage-associated signals, interacts with the N-terminal part of Nlrp1a (NACHT, LRR and PYD domains-containing protein 1a, N-terminus), preventing activation of the Nlrp1a inflammasome. In response to pathogen-associated signals, the N-terminal part of Nlrp1a is degraded by the proteasome, releasing this form, which polymerizes to form the Nlrp1a inflammasome complex: the Nlrp1a inflammasome complex then directly recruits pro-caspase-1 (proCASP1) and promotes caspase-1 (CASP1) activation, leading to gasdermin-D (GSDMD) cleavage and subsequent pyroptosis. This Rattus norvegicus (Rat) protein is NACHT, LRR and PYD domains-containing protein 1a allele 4.